The following is a 165-amino-acid chain: Protein SprT (165 aa).

Residues 20–163 (EKLAQANLKL…RCVHCGEQLV (144 aa)) form the SprT-like domain. Zn(2+) is bound at residue His-78. Glu-79 is an active-site residue. His-82 serves as a coordination point for Zn(2+).

It belongs to the SprT family. Zn(2+) serves as cofactor.

The protein localises to the cytoplasm. The protein is Protein SprT of Shigella sonnei (strain Ss046).